The primary structure comprises 180 residues: Calcium-binding protein E (180 aa).

4 consecutive EF-hand domains span residues 3 to 38 (KVEA…NSNI), 40 to 76 (DPLA…KKIK), 85 to 120 (ALRS…DPDF), and 139 to 174 (RAKS…HPEF). Asp16, Asp18, Asp20, Asn22, and Glu27 together coordinate Ca(2+). Asp98, Asp100, Asp102, Glu109, Asp152, Asp154, Asn156, Lys158, and Glu163 together coordinate Ca(2+).

In Dictyostelium discoideum (Social amoeba), this protein is Calcium-binding protein E (cbpE).